Reading from the N-terminus, the 234-residue chain is UPF0173 metal-dependent hydrolase Rleg2_1519 (234 aa).

The protein belongs to the UPF0173 family.

In Rhizobium leguminosarum bv. trifolii (strain WSM2304), this protein is UPF0173 metal-dependent hydrolase Rleg2_1519.